The primary structure comprises 653 residues: Endoglin (653 aa).

Residues 1–26 (MDRGVLPLPITLLFVIYSFVPTTGLA) form the signal peptide. The tract at residues 27 to 47 (ERVGCDLQPVDPTRGEVTFTT) is OR1, N-terminal part. Positions 27-337 (ERVGCDLQPV…SSCGGVFQTT (311 aa)) are required for interaction with GDF2. Over 27–581 (ERVGCDLQPV…IVSPDLSGKG (555 aa)) the chain is Extracellular. Intrachain disulfides connect C31–C209, C54–C184, C244–C330, C350–C382, C363–C442, C394–C412, and C493–C549. The OR2 stretch occupies residues 48–201 (SQVSEGCVAQ…MGATLEWQPR (154 aa)). Residues N89, N135, and N266 are each glycosylated (N-linked (GlcNAc...) asparagine). The interval 202-330 (AQTPVQSCRL…SNVSLRASSC (129 aa)) is OR1, C-terminal part. The segment at 270–282 (QILTTGEYSVKIF) is essential for interaction with GDF2. 2 N-linked (GlcNAc...) asparagine glycosylation sites follow: N307 and N322. A ZP domain is found at 363–510 (CGNQVMTLAL…GDMVELIQSR (148 aa)). A helical membrane pass occupies residues 582–606 (LVLPSVLGITFGAFLIGALLTAALW). Over 607–653 (YIYSHTRGPSKREPVVAVAAPASSESSSTNHSIGSTQSTPCSTSSMA) the chain is Cytoplasmic. Low complexity predominate over residues 624–634 (VAAPASSESSS). Residues 624-653 (VAAPASSESSSTNHSIGSTQSTPCSTSSMA) are disordered. A compositionally biased stretch (polar residues) spans 635–653 (TNHSIGSTQSTPCSTSSMA). Phosphoserine; by TGFBR1 is present on residues S641 and S644.

Homodimer; disulfide-linked. Forms a heteromeric complex with the signaling receptors for transforming growth factor-beta: TGFBR1 and/or TGFBR2. Interacts with TGFB1. It is able to bind TGFB1 and TGFB2 with high affinity, but not TGFB3. Interacts with GDF2, forming a heterotetramer with a 2:2 stoichiometry. Interacts with ACVRL1. Can form a heteromeric complex with GDF2 and ACVRL1. Interacts with BMP10. Interacts with DYNLT4. Interacts with ARRB2. In terms of tissue distribution, detected on blood vessels (at protein level). Detected on adult pulmonary artery, capillaries supporting the heart muscle and lung alveolar capillary endothelial cells. Endoglin is restricted to endothelial cells in all tissues except bone marrow and is also found in stromal cells within the connective tissue of intestine, stomach, heart, skeletal muscle, uterus, ovary, oviduct, testis and thymus.

It is found in the cell membrane. Its function is as follows. Vascular endothelium glycoprotein that plays an important role in the regulation of angiogenesis. Required for normal structure and integrity of adult vasculature. Regulates the migration of vascular endothelial cells. Required for normal extraembryonic angiogenesis and for embryonic heart development. May regulate endothelial cell shape changes in response to blood flow, which drive vascular remodeling and establishment of normal vascular morphology during angiogenesis. May play a role in the binding of endothelial cells to integrins. Acts as a TGF-beta coreceptor and is involved in the TGF-beta/BMP signaling cascade that ultimately leads to the activation of SMAD transcription factors. Required for GDF2/BMP9 signaling through SMAD1 in endothelial cells and modulates TGFB1 signaling through SMAD3. This Mus musculus (Mouse) protein is Endoglin (Eng).